The primary structure comprises 175 residues: Ferritin light chain (175 aa).

Serine 2 carries the N-acetylserine modification. The region spanning 7-156 (QNYSTEVEAA…DHLTNLRRLA (150 aa)) is the Ferritin-like diiron domain. Residues glutamate 54, glutamate 57, glutamate 58, glutamate 61, and glutamate 64 each contribute to the Fe cation site.

The protein belongs to the ferritin family. In terms of assembly, oligomer of 24 subunits. There are two types of subunits: L (light) chain and H (heavy) chain. The major chain can be light or heavy, depending on the species and tissue type. The functional molecule forms a roughly spherical shell with a diameter of 12 nm and contains a central cavity into which the insoluble mineral iron core is deposited. Interacts with NCOA4.

Its subcellular location is the cytoplasmic vesicle. The protein localises to the autophagosome. The protein resides in the cytoplasm. It is found in the autolysosome. Its function is as follows. Stores iron in a soluble, non-toxic, readily available form. Important for iron homeostasis. Iron is taken up in the ferrous form and deposited as ferric hydroxides after oxidation. Also plays a role in delivery of iron to cells. Mediates iron uptake in capsule cells of the developing kidney. Delivery to lysosomes by the cargo receptor NCOA4 for autophagic degradation and release or iron. This chain is Ferritin light chain (FTL), found in Canis lupus familiaris (Dog).